The primary structure comprises 691 residues: Lectin-domain containing receptor kinase VI.4 (691 aa).

An N-terminal signal peptide occupies residues 1–19 (MGRAKSMVSLLLVLFLVRA). Residues 20–306 (HVATTETTTE…AKKRGYNGKV (287 aa)) lie on the Extracellular side of the membrane. The segment at 26–273 (TTTEFIFHGF…AHYVMGWSFA (248 aa)) is legume-lectin like. A helical membrane pass occupies residues 307–327 (IALIVALSTVISIMLVLLFLF). The Cytoplasmic segment spans residues 328-691 (MMYKKRMQQE…ISSTSLISGR (364 aa)). Residues 363–641 (FKENRVVGTG…LNRDEDVPEI (279 aa)) form the Protein kinase domain. Residues 369-377 (VGTGGFGIV) and K392 contribute to the ATP site. D491 acts as the Proton acceptor in catalysis.

This sequence in the C-terminal section; belongs to the protein kinase superfamily. Ser/Thr protein kinase family. In the N-terminal section; belongs to the leguminous lectin family.

The protein resides in the cell membrane. The enzyme catalyses L-seryl-[protein] + ATP = O-phospho-L-seryl-[protein] + ADP + H(+). The catalysed reaction is L-threonyl-[protein] + ATP = O-phospho-L-threonyl-[protein] + ADP + H(+). Involved in negative regulation of abscisic acid response in seed germination. The protein is Lectin-domain containing receptor kinase VI.4 (LECRK64) of Arabidopsis thaliana (Mouse-ear cress).